Consider the following 96-residue polypeptide: Large ribosomal subunit protein eL21 (96 aa).

Belongs to the eukaryotic ribosomal protein eL21 family.

The protein is Large ribosomal subunit protein eL21 of Methanothrix thermoacetophila (strain DSM 6194 / JCM 14653 / NBRC 101360 / PT) (Methanosaeta thermophila).